Consider the following 118-residue polypeptide: MEKTLATSHTKRSSPPSPSSAVNTSSTGFNRRTRQRLSDATASVSETDVEDEDEDEEGVEEKIEALQTIVPGGTELGVDALFEETASYILALQCQINAIKVLTTFLERCEKKDMKFGG.

The disordered stretch occupies residues 1 to 59 (MEKTLATSHTKRSSPPSPSSAVNTSSTGFNRRTRQRLSDATASVSETDVEDEDEDEEGV). Polar residues predominate over residues 19–30 (SSAVNTSSTGFN). The 50-residue stretch at 43-92 (SVSETDVEDEDEDEEGVEEKIEALQTIVPGGTELGVDALFEETASYILAL) folds into the bHLH domain. The segment covering 47 to 59 (TDVEDEDEDEEGV) has biased composition (acidic residues).

This sequence belongs to the bHLH protein family. In terms of assembly, homodimer.

The protein resides in the nucleus. In terms of biological role, atypical bHLH transcription factor that acts as a negative regulator of a variety of shade avoidance syndrome (SAS) responses, including seedling elongation and photosynthetic pigment accumulation. Acts as a direct transcriptional repressor of two auxin-responsive genes, SAUR15 and SAUR68. May function in integrating shade and hormone transcriptional networks in response to light and auxin changes. This chain is Transcription factor PAR2 (PAR2), found in Arabidopsis thaliana (Mouse-ear cress).